Here is a 146-residue protein sequence, read N- to C-terminus: Hemoglobin subunit beta-2 (146 aa).

In terms of domain architecture, Globin spans 2–146 (HWTAEEKQLI…VAHALARRYH (145 aa)). The heme b site is built by histidine 63 and histidine 92.

It belongs to the globin family. Heterotetramer of two alpha chains and two beta chains. As to expression, red blood cells.

In terms of biological role, involved in oxygen transport from the lung to the various peripheral tissues. The sequence is that of Hemoglobin subunit beta-2 from Iguana iguana (Common iguana).